The sequence spans 357 residues: Peptide chain release factor 1 (357 aa).

Position 234 is an N5-methylglutamine (Gln-234). Positions 284–307 are enriched in basic and acidic residues; the sequence is KKQEQRSNDRKQQVGSGDRSERIR. A disordered region spans residues 284–313; it reads KKQEQRSNDRKQQVGSGDRSERIRTYNFPQ.

It belongs to the prokaryotic/mitochondrial release factor family. Methylated by PrmC. Methylation increases the termination efficiency of RF1.

The protein localises to the cytoplasm. Functionally, peptide chain release factor 1 directs the termination of translation in response to the peptide chain termination codons UAG and UAA. The sequence is that of Peptide chain release factor 1 from Borrelia turicatae (strain 91E135).